The following is a 149-amino-acid chain: Large ribosomal subunit protein bL9 (149 aa).

It belongs to the bacterial ribosomal protein bL9 family.

Functionally, binds to the 23S rRNA. In Fervidobacterium nodosum (strain ATCC 35602 / DSM 5306 / Rt17-B1), this protein is Large ribosomal subunit protein bL9.